A 644-amino-acid chain; its full sequence is uncharacterized protein (644 aa).

Residues 123–644 (VSQQIQHDQH…AVGKKKPTKK (522 aa)) are disordered. Residues 133-155 (PQYNKHPQNNHHPQNTQHSQNNP) are compositionally biased toward low complexity. Over residues 159–174 (NINESENKEDLSDRSS) the composition is skewed to basic and acidic residues. A compositionally biased stretch (polar residues) spans 175 to 191 (DSANSEESHNSQYSQDS). Residues 192–204 (GDSRNYQDSEDNK) show a composition bias toward basic and acidic residues. Polar residues predominate over residues 216–233 (NKLIVQRLTNPKITPDTI). Composition is skewed to basic and acidic residues over residues 236 to 249 (SNKD…KDLS) and 256 to 279 (SIKD…KSKE). 2 stretches are compositionally biased toward acidic residues: residues 292 to 301 (DGDDLDDLGN) and 310 to 338 (SDYE…DDSN). Positions 367–400 (KSPSNSKKSKTNQKLSQSSKKISSKTITNSGSKS) are enriched in low complexity. Positions 447 to 476 (SDDSDNESDNESDNESNNDSDNETDSEIDD) are enriched in acidic residues. Low complexity predominate over residues 496–531 (PKTPMKPNNKTTSVSKPVSKPPVKSSIKNNTKNNKP). The span at 544 to 558 (KQKDQSESQSDKDID) shows a compositional bias: basic and acidic residues. A compositionally biased stretch (low complexity) spans 585–594 (PPKSVSLPSS). Residues 607–630 (TAKTQNKSKSQPKTNGSKTSTKSI) show a composition bias toward polar residues.

This is an uncharacterized protein from Acanthamoeba polyphaga mimivirus (APMV).